A 131-amino-acid chain; its full sequence is MINDIISDSLTRIRNAGMRKLETTKLLHSKAVEALVGIFQAKGYIESFNVIEEDKKKFINVVLKYDEKGKSVINNLKRISKPGRRVYKGKDEIKRFKNGYGTIVVSTSHGVLANDEAYKAGVGGEILCTIW.

Belongs to the universal ribosomal protein uS8 family. Part of the 30S ribosomal subunit. Contacts proteins S5 and S12.

Its function is as follows. One of the primary rRNA binding proteins, it binds directly to 16S rRNA central domain where it helps coordinate assembly of the platform of the 30S subunit. The sequence is that of Small ribosomal subunit protein uS8 from Campylobacter jejuni subsp. doylei (strain ATCC BAA-1458 / RM4099 / 269.97).